Consider the following 196-residue polypeptide: UDP-N-acetylglucosamine transferase subunit ALG13 (196 aa).

It belongs to the glycosyltransferase 28 family. In terms of assembly, heterodimer with ALG14 to form a functional enzyme.

It localises to the endoplasmic reticulum. It catalyses the reaction an N-acetyl-alpha-D-glucosaminyl-diphospho-di-trans,poly-cis-dolichol + UDP-N-acetyl-alpha-D-glucosamine = an N,N'-diacetylchitobiosyl-diphospho-di-trans,poly-cis-dolichol + UDP + H(+). Involved in protein N-glycosylation. Essential for the second step of the dolichol-linked oligosaccharide pathway. In Yarrowia lipolytica (strain CLIB 122 / E 150) (Yeast), this protein is UDP-N-acetylglucosamine transferase subunit ALG13 (ALG13).